A 155-amino-acid polypeptide reads, in one-letter code: Regulatory protein RecX (155 aa).

This sequence belongs to the RecX family.

The protein resides in the cytoplasm. In terms of biological role, modulates RecA activity. The protein is Regulatory protein RecX of Pseudomonas fluorescens (strain SBW25).